Here is a 147-residue protein sequence, read N- to C-terminus: MRVLLQRVKEASVTVEEEVVGAINAGYLLLVGVTHEDTEEEVNWLADKVTGLRVFEDDQEKMNLSIQDVSGQILSVSQFTLYGDTMKGRRPAFTKAAKPDMAETLYEKFNERLRANGLIVETGRFGAMMDVALVNDGPVTLMLEKNA.

The Gly-cisPro motif, important for rejection of L-amino acids motif lies at 137–138 (GP).

The protein belongs to the DTD family. As to quaternary structure, homodimer.

It is found in the cytoplasm. It carries out the reaction glycyl-tRNA(Ala) + H2O = tRNA(Ala) + glycine + H(+). It catalyses the reaction a D-aminoacyl-tRNA + H2O = a tRNA + a D-alpha-amino acid + H(+). In terms of biological role, an aminoacyl-tRNA editing enzyme that deacylates mischarged D-aminoacyl-tRNAs. Also deacylates mischarged glycyl-tRNA(Ala), protecting cells against glycine mischarging by AlaRS. Acts via tRNA-based rather than protein-based catalysis; rejects L-amino acids rather than detecting D-amino acids in the active site. By recycling D-aminoacyl-tRNA to D-amino acids and free tRNA molecules, this enzyme counteracts the toxicity associated with the formation of D-aminoacyl-tRNA entities in vivo and helps enforce protein L-homochirality. This chain is D-aminoacyl-tRNA deacylase, found in Exiguobacterium sp. (strain ATCC BAA-1283 / AT1b).